Consider the following 326-residue polypeptide: Beta-ketoacyl-[acyl-carrier-protein] synthase III (326 aa).

Residues Cys120 and His253 contribute to the active site. Positions 254–258 are ACP-binding; the sequence is QANIR. Asn283 is a catalytic residue.

This sequence belongs to the thiolase-like superfamily. FabH family. As to quaternary structure, homodimer.

It localises to the cytoplasm. It catalyses the reaction malonyl-[ACP] + acetyl-CoA + H(+) = 3-oxobutanoyl-[ACP] + CO2 + CoA. It participates in lipid metabolism; fatty acid biosynthesis. Functionally, catalyzes the condensation reaction of fatty acid synthesis by the addition to an acyl acceptor of two carbons from malonyl-ACP. Catalyzes the first condensation reaction which initiates fatty acid synthesis and may therefore play a role in governing the total rate of fatty acid production. Possesses both acetoacetyl-ACP synthase and acetyl transacylase activities. Its substrate specificity determines the biosynthesis of branched-chain and/or straight-chain of fatty acids. The chain is Beta-ketoacyl-[acyl-carrier-protein] synthase III from Cupriavidus necator (strain ATCC 17699 / DSM 428 / KCTC 22496 / NCIMB 10442 / H16 / Stanier 337) (Ralstonia eutropha).